A 300-amino-acid polypeptide reads, in one-letter code: uncharacterized protein (300 aa).

8 consecutive transmembrane segments (helical) span residues 13 to 35 (LLCI…LQPL), 45 to 67 (MLTM…SLLS), 80 to 102 (WVLF…WAPL), 106 to 128 (GINI…WAWL), 180 to 202 (IPAL…IYIL), 217 to 236 (YWLL…SANL), 243 to 265 (PVSI…AVFV), and 275 to 294 (YFTY…EGLL).

This sequence belongs to the EamA transporter family.

Its subcellular location is the cell membrane. This is an uncharacterized protein from Haemophilus influenzae (strain ATCC 51907 / DSM 11121 / KW20 / Rd).